The sequence spans 1208 residues: Chromosome partition protein Smc (1208 aa).

32-39 (PNGCGKSN) serves as a coordination point for ATP. Coiled-coil stretches lie at residues 170–205 (VTKY…GERI), 239–504 (EARA…ARVQ), and 694–1054 (VIER…QLQD).

The protein belongs to the SMC family. Homodimer.

Its subcellular location is the cytoplasm. In terms of biological role, required for chromosome condensation and partitioning. The protein is Chromosome partition protein Smc of Thauera aminoaromatica.